The primary structure comprises 234 residues: MVSQFDTQHLLNSNTALVAGVDEAGRGPLAGPVVVAAVVFDPSQPRINGLNDSKQLSPACRERLYAHIVERALAYKVVMIDSTQIDTLNIYQATMLGMRLAVEGVAHVAKSARIDGNRLPKNLPCPAEALVGGDARDPTIMAASILAKVTRDRHMVELHLQYPHYGFDKHKGYGTPAHLAALAEHGPCLEHRQSFAPVRRMLTPKAIHARQSAHQHNDNSPTKAAFNMLIERDD.

The RNase H type-2 domain occupies 16-207 (ALVAGVDEAG…VRRMLTPKAI (192 aa)). A divalent metal cation is bound by residues aspartate 22, glutamate 23, and aspartate 115.

It belongs to the RNase HII family. The cofactor is Mn(2+). Mg(2+) is required as a cofactor.

Its subcellular location is the cytoplasm. It catalyses the reaction Endonucleolytic cleavage to 5'-phosphomonoester.. Functionally, endonuclease that specifically degrades the RNA of RNA-DNA hybrids. The polypeptide is Ribonuclease HII (Xylella fastidiosa (strain M12)).